The following is a 188-amino-acid chain: MLIQILLIGVSVSMDTFAVSIGKGLTVKKLRGLDALKTALWFGGFQALFPLLGYFAASTFSKYVTAVDHWIIFGLLALIGGNMVREAFEEDEENAKETPEFDWKHMLPLAVACSIDAVAVGVSFAFMTLNIWLSVVIIGITTGLFSAAGLYIGRVFGSRWQKPAQIAGGVVLILIGLKVLFEHLGFLG.

Helical transmembrane passes span 1–21 (MLIQILLIGVSVSMDTFAVSI), 40–60 (LWFGGFQALFPLLGYFAASTF), 64–84 (VTAVDHWIIFGLLALIGGNMV), 105–127 (HMLPLAVACSIDAVAVGVSFAFM), 131–153 (IWLSVVIIGITTGLFSAAGLYIG), and 166–186 (IAGGVVLILIGLKVLFEHLGF).

This sequence belongs to the MntP (TC 9.B.29) family.

It is found in the cell membrane. Functionally, probably functions as a manganese efflux pump. The sequence is that of Putative manganese efflux pump MntP from Bifidobacterium adolescentis (strain ATCC 15703 / DSM 20083 / NCTC 11814 / E194a).